The sequence spans 445 residues: Lateral flagellar hook-associated protein 2 (445 aa).

The stretch at 388-423 (SGAFKSRKEALQANLDRLSDKQTTLERKYDMSYKRY) forms a coiled coil.

The protein belongs to the FliD family. As to quaternary structure, homopentamer.

Its subcellular location is the secreted. It localises to the bacterial flagellum. Its function is as follows. Required for the morphogenesis and for the elongation of the flagellar filament by facilitating polymerization of the flagellin monomers at the tip of growing filament. Forms a capping structure, which prevents flagellin subunits (transported through the central channel of the flagellum) from leaking out without polymerization at the distal end. Essential for swarming motility. The chain is Lateral flagellar hook-associated protein 2 (fliDL) from Vibrio parahaemolyticus serotype O3:K6 (strain RIMD 2210633).